Consider the following 689-residue polypeptide: Glycine--tRNA ligase beta subunit (689 aa).

This sequence belongs to the class-II aminoacyl-tRNA synthetase family. In terms of assembly, tetramer of two alpha and two beta subunits.

The protein localises to the cytoplasm. It carries out the reaction tRNA(Gly) + glycine + ATP = glycyl-tRNA(Gly) + AMP + diphosphate. The sequence is that of Glycine--tRNA ligase beta subunit from Citrobacter koseri (strain ATCC BAA-895 / CDC 4225-83 / SGSC4696).